The sequence spans 345 residues: NADPH dehydrogenase (345 aa).

Residue serine 23–cysteine 26 coordinates FMN. Tyrosine 28 is a binding site for substrate. FMN contacts are provided by alanine 60 and glutamine 102. Histidine 164 to histidine 167 serves as a coordination point for substrate. Residues arginine 215 and glycine 307 to arginine 308 each bind FMN.

The protein belongs to the NADH:flavin oxidoreductase/NADH oxidase family. NamA subfamily. As to quaternary structure, homotetramer. It depends on FMN as a cofactor.

It catalyses the reaction A + NADPH + H(+) = AH2 + NADP(+). Catalyzes the reduction of the double bond of an array of alpha,beta-unsaturated aldehydes and ketones. It also reduces the nitro group of nitroester and nitroaromatic compounds. It could have a role in detoxification processes. The chain is NADPH dehydrogenase from Bacillus mycoides (strain KBAB4) (Bacillus weihenstephanensis).